A 101-amino-acid chain; its full sequence is Small ribosomal subunit protein uS14 (101 aa).

Belongs to the universal ribosomal protein uS14 family. As to quaternary structure, part of the 30S ribosomal subunit. Contacts proteins S3 and S10.

Functionally, binds 16S rRNA, required for the assembly of 30S particles and may also be responsible for determining the conformation of the 16S rRNA at the A site. The protein is Small ribosomal subunit protein uS14 of Burkholderia multivorans (strain ATCC 17616 / 249).